Here is a 224-residue protein sequence, read N- to C-terminus: Mannose-specific lectin 3 (224 aa).

Bulb-type lectin domains are found at residues 2-111 (NNVL…PAAA) and 117-222 (RNVL…VWST). Disulfide bonds link cysteine 30–cysteine 52 and cysteine 145–cysteine 170.

As to quaternary structure, heterotetramer of 2 domain 1 and 2 domain 2 chains arranged as a dimer of domain 1/domain 2 heterodimers.

In terms of biological role, mannose-specific lectin. Has weak agglutinating activity towards trypsin-treated erythrocytes from rabbit but not from human. The sequence is that of Mannose-specific lectin 3 from Crocus vernus (Dutch crocus).